A 178-amino-acid chain; its full sequence is V-type proton ATPase subunit c''2 (178 aa).

Topologically, residues 1 to 24 (MSGVAIHASSWGAALVRISPYTFS) are lumenal. The chain crosses the membrane as a helical span at residues 25–45 (AIGIAISIGVSVLGAAWGIYI). Topologically, residues 46–64 (TGSSLIGAAIEAPRITSKN) are cytoplasmic. A helical membrane pass occupies residues 65-85 (LISVIFCEAVAIYGVIVAIIL). The Lumenal segment spans residues 86-108 (QTKLESVPSSKMYDAESLRAGYA). The chain crosses the membrane as a helical span at residues 109 to 129 (IFASGIIVGFANLVCGLCVGI). Over 130–147 (IGSSCALSDAQNSTLFVK) the chain is Cytoplasmic. The chain crosses the membrane as a helical span at residues 148 to 168 (ILVIEIFGSALGLFGVIVGII). Residues 169-178 (MSAQATWPTK) are Lumenal-facing.

It belongs to the V-ATPase proteolipid subunit family. In terms of assembly, V-ATPase is a heteromultimeric enzyme composed of a peripheral catalytic V1 complex (components A to H) attached to an integral membrane V0 proton pore complex (components: a, c, c'', d and e). The proteolipid components c and c'' are present as a hexameric ring that forms the proton-conducting pore. Interacts with APD2.

The protein localises to the endoplasmic reticulum membrane. The protein resides in the golgi apparatus membrane. Its function is as follows. Proton-conducting pore forming subunit of the membrane integral V0 complex of vacuolar ATPase. V-ATPase is responsible for acidifying a variety of intracellular compartments in eukaryotic cells. In Arabidopsis thaliana (Mouse-ear cress), this protein is V-type proton ATPase subunit c''2 (VHA-c''2).